Here is a 154-residue protein sequence, read N- to C-terminus: Anaerobic ribonucleoside-triphosphate reductase-activating protein (154 aa).

[4Fe-4S] cluster is bound by residues Cys-26, Cys-30, and Cys-33. S-adenosyl-L-methionine is bound by residues 32 to 34 and Gly-74; that span reads GCY.

The protein belongs to the organic radical-activating enzymes family. As to quaternary structure, forms a tetramer composed of two NrdD and two NrdG subunits. It depends on [4Fe-4S] cluster as a cofactor.

The protein localises to the cytoplasm. It catalyses the reaction glycyl-[protein] + reduced [flavodoxin] + S-adenosyl-L-methionine = glycin-2-yl radical-[protein] + semiquinone [flavodoxin] + 5'-deoxyadenosine + L-methionine + H(+). In terms of biological role, activation of anaerobic ribonucleoside-triphosphate reductase under anaerobic conditions by generation of an organic free radical, using S-adenosylmethionine and reduced flavodoxin as cosubstrates to produce 5'-deoxy-adenosine. This is Anaerobic ribonucleoside-triphosphate reductase-activating protein (nrdG) from Escherichia coli O157:H7.